A 148-amino-acid chain; its full sequence is Large ribosomal subunit protein uL15 (148 aa).

A compositionally biased stretch (basic residues) spans 1–30; it reads MTHSKRNTRKLRGHVSHGHGRVGKHRKHPG. The interval 1-38 is disordered; that stretch reads MTHSKRNTRKLRGHVSHGHGRVGKHRKHPGGRGMAGPE.

This sequence belongs to the universal ribosomal protein uL15 family.

This is Large ribosomal subunit protein uL15 (RPL27A) from Euplotes crassus.